The primary structure comprises 347 residues: Protein-glutamate methylesterase/protein-glutamine glutaminase 4 (347 aa).

Residues 3–121 (KVLIVDDSAS…HPNHEREARS (119 aa)) form the Response regulatory domain. Asp54 carries the 4-aspartylphosphate modification. A CheB-type methylesterase domain is found at 157-342 (PARLKAVAIG…PDRIVTALTS (186 aa)). Active-site residues include Ser168, His195, and Asp289.

This sequence belongs to the CheB family. In terms of processing, phosphorylated by CheA. Phosphorylation of the N-terminal regulatory domain activates the methylesterase activity.

The protein localises to the cytoplasm. The enzyme catalyses [protein]-L-glutamate 5-O-methyl ester + H2O = L-glutamyl-[protein] + methanol + H(+). The catalysed reaction is L-glutaminyl-[protein] + H2O = L-glutamyl-[protein] + NH4(+). Involved in chemotaxis. Part of a chemotaxis signal transduction system that modulates chemotaxis in response to various stimuli. Catalyzes the demethylation of specific methylglutamate residues introduced into the chemoreceptors (methyl-accepting chemotaxis proteins or MCP) by CheR. Also mediates the irreversible deamidation of specific glutamine residues to glutamic acid. This Geobacter metallireducens (strain ATCC 53774 / DSM 7210 / GS-15) protein is Protein-glutamate methylesterase/protein-glutamine glutaminase 4.